The chain runs to 314 residues: tRNA dimethylallyltransferase (314 aa).

12–19 (GPTGTGKS) lines the ATP pocket. 14–19 (TGTGKS) lines the substrate pocket.

The protein belongs to the IPP transferase family. As to quaternary structure, monomer. Mg(2+) is required as a cofactor.

It carries out the reaction adenosine(37) in tRNA + dimethylallyl diphosphate = N(6)-dimethylallyladenosine(37) in tRNA + diphosphate. In terms of biological role, catalyzes the transfer of a dimethylallyl group onto the adenine at position 37 in tRNAs that read codons beginning with uridine, leading to the formation of N6-(dimethylallyl)adenosine (i(6)A). This is tRNA dimethylallyltransferase from Mycolicibacterium paratuberculosis (strain ATCC BAA-968 / K-10) (Mycobacterium paratuberculosis).